We begin with the raw amino-acid sequence, 104 residues long: DNA-directed RNA polymerase subunit Rpo13 (104 aa).

Disordered regions lie at residues 1 to 33 and 78 to 104; these read MVSG…EDEF and RDSR…SVEG. Positions 7–31 are enriched in acidic residues; the sequence is TDEEKEGTSDEEVNEEKEVEETSED. Basic residues predominate over residues 80–104; it reads SRRKAKKAVSKKVKKTKKKEKSVEG.

The protein belongs to the archaeal Rpo13 RNA polymerase subunit family. As to quaternary structure, part of the 13-subunit RNA polymerase complex.

The protein localises to the cytoplasm. The catalysed reaction is RNA(n) + a ribonucleoside 5'-triphosphate = RNA(n+1) + diphosphate. DNA-dependent RNA polymerase (RNAP) catalyzes the transcription of DNA into RNA using the four ribonucleoside triphosphates as substrates. Probably binds dsDNA. In Saccharolobus solfataricus (strain ATCC 35092 / DSM 1617 / JCM 11322 / P2) (Sulfolobus solfataricus), this protein is DNA-directed RNA polymerase subunit Rpo13.